The following is a 300-amino-acid chain: Transacylase cctO (300 aa).

A helical membrane pass occupies residues 52–72 (IVYVSLTFFVVSIGLNFILAI). 2 short sequence motifs (HXXHC) span residues 185–189 (HQLGC) and 225–229 (HVDQC). The N-linked (GlcNAc...) asparagine glycan is linked to asparagine 270.

It belongs to the ustYa family.

The protein resides in the membrane. It functions in the pathway mycotoxin biosynthesis. Functionally, transacylase; part of the gene cluster that mediates the biosynthesis of the mycotoxin cyclochlorotine, a hepatotoxic and carcinogenic cyclic chlorinated pentapeptide. Within the pathway, cctO catalyzes the intramolecular O,N-transacylation from isocyclochlorotine to cyclochlorotine. The NRPS cctN initially catalyzes the condensation of L-serine (Ser), Pro, L-2-aminobutyrate (2Abu), Ser, and beta-Phe in this order to produce isocyclotine. After the dichlorination of Pro2 catalyzed by cctP2 to produce isocyclochlorotine, the cctO-mediated transacylation of isocyclochlorotine can furnish cyclochlorotine. The subsequent hydroxylation of cyclochlorotine by cctR yields hydroxycyclochlorotine as the final product. CctP1 probably acts as a phenylalanine aminomutase and provides the uncommon building block beta-Phe. Furthermore, 2Abu can be synthesized from threonine by one of the threonine dehydratases and transaminases localized outside of the cluster. The functions of the remaining proteins encoded by the cluster, cctM and cctT, have not been identified yet. The polypeptide is Transacylase cctO (Talaromyces islandicus (Penicillium islandicum)).